Here is a 2293-residue protein sequence, read N- to C-terminus: Protein Ycf2 A (2293 aa).

Residue 1647-1654 (GSIGTGRS) coordinates ATP.

This sequence belongs to the Ycf2 family.

It localises to the plastid. It is found in the chloroplast stroma. Probable ATPase of unknown function. Its presence in a non-photosynthetic plant (Epifagus virginiana) and experiments in tobacco indicate that it has an essential function which is probably not related to photosynthesis. The sequence is that of Protein Ycf2 A from Crucihimalaya wallichii (Rock-cress).